The primary structure comprises 190 residues: Myophilin (190 aa).

The interval methionine 1–aspartate 23 is disordered. A Calponin-homology (CH) domain is found at lysine 24–cysteine 130. Residues valine 165–methionine 189 form a Calponin-like repeat.

The protein belongs to the calponin family. As to expression, muscle specific.

The polypeptide is Myophilin (Echinococcus granulosus (Hydatid tapeworm)).